Consider the following 81-residue polypeptide: Cell division protein ZapB (81 aa).

A coiled-coil region spans residues 5–81; that stretch reads LEVFEKLESK…QALLGRMEEV (77 aa). Residues 43-64 are disordered; that stretch reads VQSAQHGREELERENSQLKEQQ. Over residues 48 to 59 the composition is skewed to basic and acidic residues; sequence HGREELERENSQ.

This sequence belongs to the ZapB family. Homodimer. The ends of the coiled-coil dimer bind to each other, forming polymers. Interacts with FtsZ.

It is found in the cytoplasm. Functionally, non-essential, abundant cell division factor that is required for proper Z-ring formation. It is recruited early to the divisome by direct interaction with FtsZ, stimulating Z-ring assembly and thereby promoting cell division earlier in the cell cycle. Its recruitment to the Z-ring requires functional FtsA or ZipA. This is Cell division protein ZapB from Klebsiella pneumoniae subsp. pneumoniae (strain ATCC 700721 / MGH 78578).